A 329-amino-acid chain; its full sequence is NADH-quinone oxidoreductase subunit H (329 aa).

Transmembrane regions (helical) follow at residues 9 to 29 (LIKI…ATYI), 42 to 62 (GPCY…IKLF), 75 to 95 (FIFT…MAPI), 117 to 137 (IGFL…ILAG), 154 to 174 (IQLL…LMVV), 188 to 208 (GGFL…FLIA), 238 to 258 (LKWG…SFVI), 269 to 291 (WGFI…LSMW), and 309 to 329 (WKIM…IILI).

It belongs to the complex I subunit 1 family. As to quaternary structure, NDH-1 is composed of 14 different subunits. Subunits NuoA, H, J, K, L, M, N constitute the membrane sector of the complex.

The protein resides in the cell inner membrane. The catalysed reaction is a quinone + NADH + 5 H(+)(in) = a quinol + NAD(+) + 4 H(+)(out). In terms of biological role, NDH-1 shuttles electrons from NADH, via FMN and iron-sulfur (Fe-S) centers, to quinones in the respiratory chain. The immediate electron acceptor for the enzyme in this species is believed to be ubiquinone. Couples the redox reaction to proton translocation (for every two electrons transferred, four hydrogen ions are translocated across the cytoplasmic membrane), and thus conserves the redox energy in a proton gradient. This subunit may bind ubiquinone. The protein is NADH-quinone oxidoreductase subunit H of Helicobacter pylori (strain P12).